The primary structure comprises 466 residues: Phosphomethylpyrimidine synthase (466 aa).

Substrate is bound by residues asparagine 80, methionine 109, tyrosine 139, histidine 175, 195 to 197 (SRG), 236 to 239 (DSLR), and glutamate 275. Histidine 279 is a binding site for Zn(2+). Tyrosine 302 is a binding site for substrate. Residue histidine 343 participates in Zn(2+) binding. Residues cysteine 423, cysteine 426, and cysteine 431 each contribute to the [4Fe-4S] cluster site.

This sequence belongs to the ThiC family. [4Fe-4S] cluster is required as a cofactor.

The enzyme catalyses 5-amino-1-(5-phospho-beta-D-ribosyl)imidazole + S-adenosyl-L-methionine = 4-amino-2-methyl-5-(phosphooxymethyl)pyrimidine + CO + 5'-deoxyadenosine + formate + L-methionine + 3 H(+). The protein operates within cofactor biosynthesis; thiamine diphosphate biosynthesis. Functionally, catalyzes the synthesis of the hydroxymethylpyrimidine phosphate (HMP-P) moiety of thiamine from aminoimidazole ribotide (AIR) in a radical S-adenosyl-L-methionine (SAM)-dependent reaction. This is Phosphomethylpyrimidine synthase from Prochlorococcus marinus (strain NATL1A).